The primary structure comprises 473 residues: Cysteine--tRNA ligase (473 aa).

Cys29 contributes to the Zn(2+) binding site. Residues 31 to 41 (PTVYDRAHLGN) carry the 'HIGH' region motif. Positions 225, 250, and 254 each coordinate Zn(2+). A 'KMSKS' region motif is present at residues 281-285 (KMSKS). Position 284 (Lys284) interacts with ATP.

This sequence belongs to the class-I aminoacyl-tRNA synthetase family. As to quaternary structure, monomer. Zn(2+) is required as a cofactor.

The protein localises to the cytoplasm. It catalyses the reaction tRNA(Cys) + L-cysteine + ATP = L-cysteinyl-tRNA(Cys) + AMP + diphosphate. The polypeptide is Cysteine--tRNA ligase (Roseobacter denitrificans (strain ATCC 33942 / OCh 114) (Erythrobacter sp. (strain OCh 114))).